A 525-amino-acid polypeptide reads, in one-letter code: Protein-export membrane protein SecD (525 aa).

6 helical membrane-spanning segments follow: residues 16–36, 368–388, 395–415, 421–441, 466–486, and 488–508; these read VLLLILFLIGSVVSMSIKGLT, QAIIAGIGALIAVLLIVYFHY, IPVASTSLFEVIIILGIAALI, LPSIAGIIAAIGTGVDQQIVI, AFFIIFASAATTIVAMSFLLV, and FVGTLKGFAVTTILGVLIGVL.

The protein belongs to the SecD/SecF family. SecD subfamily. Part of the protein translocation apparatus. Forms a complex with SecF.

It localises to the cell membrane. Involved in protein export. The chain is Protein-export membrane protein SecD from Thermococcus gammatolerans (strain DSM 15229 / JCM 11827 / EJ3).